Reading from the N-terminus, the 478-residue chain is Noelin-3 (478 aa).

The first 23 residues, 1-23 (MSAPLLKLGAVLSTMAMISNWMS), serve as a signal peptide directing secretion. N-linked (GlcNAc...) asparagine glycans are attached at residues N33, N95, N179, N299, and N465. A coiled-coil region spans residues 77-217 (CSRDAKSRQL…TRLRDCMKKL (141 aa)). One can recognise an Olfactomedin-like domain in the interval 218–470 (TCGKLMKITG…QVLFNVTLFH (253 aa)). C219 and C401 are oxidised to a cystine.

In terms of assembly, peripherally associated with AMPAR complex. AMPAR complex consists of an inner core made of 4 pore-forming GluA/GRIA proteins (GRIA1, GRIA2, GRIA3 and GRIA4) and 4 major auxiliary subunits arranged in a twofold symmetry. One of the two pairs of distinct binding sites is occupied either by CNIH2, CNIH3 or CACNG2, CACNG3. The other harbors CACNG2, CACNG3, CACNG4, CACNG8 or GSG1L. This inner core of AMPAR complex is complemented by outer core constituents binding directly to the GluA/GRIA proteins at sites distinct from the interaction sites of the inner core constituents. Outer core constituents include at least PRRT1, PRRT2, CKAMP44/SHISA9, FRRS1L and NRN1. The proteins of the inner and outer core serve as a platform for other, more peripherally associated AMPAR constituents, including OLFM3. Alone or in combination, these auxiliary subunits control the gating and pharmacology of the AMPAR complex and profoundly impact their biogenesis and protein processing. Homodimer. Interacts with MYOC. Interacts with OLFM2. In terms of tissue distribution, expressed in the brain (at protein level). Also expressed in the retina, mainly in the ganglion cell layer and in the amacrine cell subregion of the inner nuclear layer. Expressed at high levels in the epithelial cells of the posterior iris and the ciliary body and, at lower levels, in the trabecular meshwork. Isoform 2 preferentially expressed in retina and brain, while isoform 1 preferentially expressed in the tissues of the eye angle.

It localises to the secreted. It is found in the synapse. The chain is Noelin-3 (Olfm3) from Rattus norvegicus (Rat).